The following is a 179-amino-acid chain: Large ribosomal subunit protein uL5 (179 aa).

Belongs to the universal ribosomal protein uL5 family. As to quaternary structure, part of the 50S ribosomal subunit; part of the 5S rRNA/L5/L18/L25 subcomplex. Contacts the 5S rRNA and the P site tRNA. Forms a bridge to the 30S subunit in the 70S ribosome.

In terms of biological role, this is one of the proteins that bind and probably mediate the attachment of the 5S RNA into the large ribosomal subunit, where it forms part of the central protuberance. In the 70S ribosome it contacts protein S13 of the 30S subunit (bridge B1b), connecting the 2 subunits; this bridge is implicated in subunit movement. Contacts the P site tRNA; the 5S rRNA and some of its associated proteins might help stabilize positioning of ribosome-bound tRNAs. This chain is Large ribosomal subunit protein uL5, found in Pseudomonas syringae pv. tomato (strain ATCC BAA-871 / DC3000).